The sequence spans 233 residues: Large ribosomal subunit protein uL1 (233 aa).

The protein belongs to the universal ribosomal protein uL1 family. Part of the 50S ribosomal subunit.

Functionally, binds directly to 23S rRNA. The L1 stalk is quite mobile in the ribosome, and is involved in E site tRNA release. Protein L1 is also a translational repressor protein, it controls the translation of the L11 operon by binding to its mRNA. The sequence is that of Large ribosomal subunit protein uL1 from Shewanella frigidimarina (strain NCIMB 400).